Here is a 484-residue protein sequence, read N- to C-terminus: Xylulose kinase (484 aa).

77–78 lines the substrate pocket; the sequence is MH. The Proton acceptor role is filled by Asp-233.

Belongs to the FGGY kinase family. Homodimer.

The catalysed reaction is D-xylulose + ATP = D-xylulose 5-phosphate + ADP + H(+). It carries out the reaction 1-deoxy-D-xylulose + ATP = 1-deoxy-D-xylulose 5-phosphate + ADP + H(+). Its activity is regulated as follows. Sugar binding is accompanied by a dramatic hinge-bending movement that enhances interactions with Mg-ATP. Functionally, catalyzes the phosphorylation of D-xylulose to D-xylulose 5-phosphate. Also catalyzes the phosphorylation of 1-deoxy-D-xylulose to 1-deoxy-D-xylulose 5-phosphate, with lower efficiency. Can also use D-ribulose, xylitol and D-arabitol, but D-xylulose is preferred over the other substrates. Has a weak substrate-independent Mg-ATP-hydrolyzing activity. This is Xylulose kinase from Escherichia coli (strain K12).